Reading from the N-terminus, the 1346-residue chain is DNA-directed RNA polymerase subunit beta (1346 aa).

This sequence belongs to the RNA polymerase beta chain family. In terms of assembly, the RNAP catalytic core consists of 2 alpha, 1 beta, 1 beta' and 1 omega subunit. When a sigma factor is associated with the core the holoenzyme is formed, which can initiate transcription.

The enzyme catalyses RNA(n) + a ribonucleoside 5'-triphosphate = RNA(n+1) + diphosphate. DNA-dependent RNA polymerase catalyzes the transcription of DNA into RNA using the four ribonucleoside triphosphates as substrates. The polypeptide is DNA-directed RNA polymerase subunit beta (Psychromonas ingrahamii (strain DSM 17664 / CCUG 51855 / 37)).